An 81-amino-acid polypeptide reads, in one-letter code: Fungal defensin micasin (81 aa).

The signal sequence occupies residues 1–21 (MQFTKLATILLVSLMGSAAIA). Residues 22-43 (APATNNAAVDAAADATPAVEKR) constitute a propeptide that is removed on maturation. Disulfide bonds link C47/C68, C54/C76, and C58/C78.

This sequence belongs to the invertebrate defensin family.

Its subcellular location is the secreted. In terms of biological role, antibacterial peptide with potent activity against both Gram-positive and Gram-negative bacteria. May kill bacteria via an intracellular action mode to affect protein folding. Does not show effects on tested filamentous fungi or on the yeast S.cerevisiae. Does not act by destroying the membrane integrity, which is consistent with its nonamphiphilic architecture. Acts more rapidly than vancomycin, suggesting it does not act by inhibiting cell-wall biosynthesis. Does not cause hemolysis and has no cytotoxic effect on HEK cells. In vivo, is as efficient as vancomycin to protect mouse peritonitis models from S.aureus and P.aeruginosa infections. The sequence is that of Fungal defensin micasin from Arthroderma otae (Microsporum canis).